The sequence spans 168 residues: Endoribonuclease YbeY (168 aa).

Zn(2+) is bound by residues His125, His129, and His135.

It belongs to the endoribonuclease YbeY family. Zn(2+) is required as a cofactor.

It is found in the cytoplasm. Functionally, single strand-specific metallo-endoribonuclease involved in late-stage 70S ribosome quality control and in maturation of the 3' terminus of the 16S rRNA. The sequence is that of Endoribonuclease YbeY from Rhodopseudomonas palustris (strain BisB18).